The primary structure comprises 637 residues: Chaperone protein DnaK (637 aa).

T198 bears the Phosphothreonine; by autocatalysis mark. Positions 597-637 (MYQQQAEGDAARDAAQDAAKDDVVDAEFTEVDDDKNDKKSA) are disordered. Over residues 605–619 (DAARDAAQDAAKDDV) the composition is skewed to basic and acidic residues. Over residues 620 to 630 (VDAEFTEVDDD) the composition is skewed to acidic residues.

It belongs to the heat shock protein 70 family.

Acts as a chaperone. This is Chaperone protein DnaK from Afipia carboxidovorans (strain ATCC 49405 / DSM 1227 / KCTC 32145 / OM5) (Oligotropha carboxidovorans).